We begin with the raw amino-acid sequence, 1153 residues long: PPi-type phosphoenolpyruvate carboxykinase 3 (1153 aa).

A coiled-coil region spans residues 1085–1131 (RQKLEVAKLNKDLAYLNKTIAEKPRLAETLNKQIAAVKEELQYVSSE).

The protein belongs to the PPi-type phosphoenolpyruvate carboxykinase family. Monomer and trimer; forms heterotrimers with PEPCK1 and PEPCK2.

The protein resides in the cytoplasm. It localises to the cytosol. It catalyses the reaction oxaloacetate + diphosphate = phosphoenolpyruvate + phosphate + CO2. Inorganic pyrophosphate (PPi)-dependent phosphoenolpyruvate carboxykinase, which regulates the carbon flow of the central metabolism by fixing CO(2) to phosphoenolpyruvate to produce oxaloacetate. Can also produce pyruvate and diphosphate from phosphoenolpyruvate and phosphate. The polypeptide is PPi-type phosphoenolpyruvate carboxykinase 3 (Entamoeba histolytica (strain ATCC 30459 / HM-1:IMSS / ABRM)).